The sequence spans 216 residues: PRA1 family protein B6 (216 aa).

Position 2 is an N-acetylalanine (Ala-2). Transmembrane regions (helical) follow at residues Leu-83–Ala-103, Leu-105–Gly-125, Leu-135–Leu-155, Leu-159–Phe-179, and Ile-186–Ile-206.

The protein belongs to the PRA1 family. In terms of assembly, interacts with PRA1B1, PRA1B2, PRA1B3, PRA1B4, PRA1B5 and PRA1E. In terms of tissue distribution, expressed in hypocotyls, roots, lateral roots, lateral root caps, columella cells, leaves and stomata.

It localises to the endoplasmic reticulum membrane. Functionally, may be involved in both secretory and endocytic intracellular trafficking in the endosomal/prevacuolar compartments. In Arabidopsis thaliana (Mouse-ear cress), this protein is PRA1 family protein B6 (PRA1B6).